The chain runs to 130 residues: Small ribosomal subunit protein uS9 (130 aa).

The span at 101-110 shows a compositional bias: basic and acidic residues; that stretch reads AGFLTRDPRM. A disordered region spans residues 101–130; the sequence is AGFLTRDPRMKERKKYGLKKARRAPQFSKR. Over residues 111-130 the composition is skewed to basic residues; sequence KERKKYGLKKARRAPQFSKR.

This sequence belongs to the universal ribosomal protein uS9 family.

This chain is Small ribosomal subunit protein uS9, found in Clostridium tetani (strain Massachusetts / E88).